The sequence spans 1379 residues: Increased rDNA silencing protein 4 homolog (1379 aa).

Disordered stretches follow at residues Met1–Ser25, Thr138–Arg159, Glu240–Ser314, Ser337–Met370, Ala534–Gln573, Thr768–Gly816, Asp1047–Gln1110, and Ala1168–Tyr1208. Residues Pro250–Lys259 show a composition bias toward basic and acidic residues. Over residues Ala262–Leu287 the composition is skewed to polar residues. The segment covering Ser541–Ser555 has biased composition (low complexity). Residues Pro562 to Gln573 show a composition bias toward polar residues. Over residues Leu770–Ser780 the composition is skewed to basic residues. Positions Asp793–Glu802 are enriched in acidic residues. In terms of domain architecture, EH spans Ala1240–Met1329. Positions Ala1273–Tyr1308 constitute an EF-hand domain.

The protein belongs to the IRS4 family.

Positive regulator of phosphatidylinositol 4,5-bisphosphate turnover and negatively regulates signaling through the cell integrity pathway. Involved in rDNA silencing. This chain is Increased rDNA silencing protein 4 homolog, found in Schizosaccharomyces pombe (strain 972 / ATCC 24843) (Fission yeast).